The following is a 172-amino-acid chain: 3-hydroxydecanoyl-[acyl-carrier-protein] dehydratase (172 aa).

Residue His71 is part of the active site.

Belongs to the thioester dehydratase family. FabA subfamily. Homodimer.

It localises to the cytoplasm. The catalysed reaction is a (3R)-hydroxyacyl-[ACP] = a (2E)-enoyl-[ACP] + H2O. It carries out the reaction (3R)-hydroxydecanoyl-[ACP] = (2E)-decenoyl-[ACP] + H2O. The enzyme catalyses (2E)-decenoyl-[ACP] = (3Z)-decenoyl-[ACP]. Its pathway is lipid metabolism; fatty acid biosynthesis. Necessary for the introduction of cis unsaturation into fatty acids. Catalyzes the dehydration of (3R)-3-hydroxydecanoyl-ACP to E-(2)-decenoyl-ACP and then its isomerization to Z-(3)-decenoyl-ACP. Can catalyze the dehydratase reaction for beta-hydroxyacyl-ACPs with saturated chain lengths up to 16:0, being most active on intermediate chain length. In Sodalis glossinidius (strain morsitans), this protein is 3-hydroxydecanoyl-[acyl-carrier-protein] dehydratase.